A 315-amino-acid chain; its full sequence is Mitochondrial glutamate carrier 2 (315 aa).

3 Solcar repeats span residues 6 to 92 (LSIT…FRRL), 100 to 210 (RNLK…LNNL), and 219 to 308 (ASFA…GIGE). The next 3 membrane-spanning stretches (helical) occupy residues 12–32 (LINGGVAGLVGVTCVFPIDLA), 61–81 (FFGMYRGAAVNLTLVTPEKAI), and 106–126 (MLAGCGAGMCQVVVTCPMEML). The tract at residues 141–160 (QGSASAPSTSRSYTTGSAST) is disordered. A compositionally biased stretch (polar residues) spans 142–159 (GSASAPSTSRSYTTGSAS). Ser-145 carries the phosphoserine modification. Helical transmembrane passes span 185–205 (GLGATLLRDIPFSIIYFPLFA), 225–245 (FVSGCVAGSIAAVAVTPLDVL), and 288–308 (ALVIAPLFGIAQGVYFIGIGE).

Belongs to the mitochondrial carrier (TC 2.A.29) family. Expressed in brain, to a lesser extent in testis, and poorly in all the other tissues.

Its subcellular location is the mitochondrion inner membrane. It carries out the reaction L-glutamate(in) + H(+)(in) = L-glutamate(out) + H(+)(out). Its function is as follows. Responsible for the transport of glutamate from the cytosol into the mitochondrial matrix with the concomitant import of a proton (symport system). The sequence is that of Mitochondrial glutamate carrier 2 from Homo sapiens (Human).